A 295-amino-acid polypeptide reads, in one-letter code: Hepatic leukemia factor (295 aa).

Residues 37–52 (EDAFSKDKDKEKKLDD) are compositionally biased toward basic and acidic residues. Disordered regions lie at residues 37–70 (EDAF…PTLW) and 93–167 (SENG…IDPD). The 64-residue stretch at 225–288 (DDKYWARRRK…GKCKNILAKY (64 aa)) folds into the bZIP domain. A basic motif region spans residues 227–247 (KYWARRRKNNMAAKRSRDARR). A leucine-zipper region spans residues 248–255 (LKENQIAI).

It belongs to the bZIP family. PAR subfamily. As to quaternary structure, binds DNA specifically as homodimer or heterodimer with other PAR factors. Highly expressed in liver; lower levels in lung and kidney.

The protein localises to the nucleus. This chain is Hepatic leukemia factor (HLF), found in Homo sapiens (Human).